Here is a 61-residue protein sequence, read N- to C-terminus: Metallothionein-1L (61 aa).

The tract at residues methionine 1–cysteine 29 is beta. A divalent metal cation is bound by residues cysteine 5, cysteine 7, cysteine 13, cysteine 15, cysteine 19, cysteine 21, cysteine 24, cysteine 26, cysteine 29, cysteine 33, cysteine 34, cysteine 36, cysteine 37, cysteine 41, cysteine 44, cysteine 48, cysteine 50, cysteine 57, cysteine 59, and cysteine 60. Residues lysine 30–alanine 61 are alpha.

The protein belongs to the metallothionein superfamily. Type 1 family. In terms of assembly, monomer. As to expression, expressed in reticulocytes.

Its function is as follows. Metallothioneins have a high content of cysteine residues that bind various heavy metals; these proteins are transcriptionally regulated by both heavy metals and glucocorticoids. This Homo sapiens (Human) protein is Metallothionein-1L (MT1L).